Here is a 322-residue protein sequence, read N- to C-terminus: 2-oxoglutarate-dependent dioxygenase caaD (322 aa).

The region spanning T172–D279 is the Fe2OG dioxygenase domain. The Fe cation site is built by H200, D202, and H259. 2-oxoglutarate is bound at residue R269.

It belongs to the iron/ascorbate-dependent oxidoreductase family. Fe(2+) serves as cofactor.

It participates in secondary metabolite biosynthesis. Its function is as follows. 2-oxoglutarate-dependent dioxygenase; part of the gene cluster that produces the acyltetronic acid derivatives carlosic acid, agglomerin F and carlosic acid methyl ether. CaaD catalyzes the sequential oxidations of the terminal C-10 methyl group of the caaC product to form carboxylic acid which is necessary for the biosynthesis of agglomerin F. In Aspergillus niger (strain ATCC MYA-4892 / CBS 513.88 / FGSC A1513), this protein is 2-oxoglutarate-dependent dioxygenase caaD.